We begin with the raw amino-acid sequence, 67 residues long: uncharacterized protein (67 aa).

Residues 19–39 form a helical membrane-spanning segment; it reads ISFIIFFFFYFFFFYFFYGFW.

Its subcellular location is the membrane. This is an uncharacterized protein from Dictyostelium discoideum (Social amoeba).